A 347-amino-acid polypeptide reads, in one-letter code: Mediator of RNA polymerase II transcription subunit 7 (347 aa).

Disordered stretches follow at residues 97 to 172 and 302 to 326; these read GIER…TQTH and VPVG…GAEE. Composition is skewed to low complexity over residues 108-171 and 302-312; these read STTT…STQT and VPVGARTGTTV.

The protein belongs to the Mediator complex subunit 7 family. As to quaternary structure, component of the Mediator complex.

The protein localises to the nucleus. Functionally, component of the Mediator complex, a coactivator involved in the regulated transcription of nearly all RNA polymerase II-dependent genes. Mediator functions as a bridge to convey information from gene-specific regulatory proteins to the basal RNA polymerase II transcription machinery. Mediator is recruited to promoters by direct interactions with regulatory proteins and serves as a scaffold for the assembly of a functional preinitiation complex with RNA polymerase II and the general transcription factors. This is Mediator of RNA polymerase II transcription subunit 7 (med-7) from Neurospora crassa (strain ATCC 24698 / 74-OR23-1A / CBS 708.71 / DSM 1257 / FGSC 987).